A 493-amino-acid polypeptide reads, in one-letter code: Cytoplasmic tRNA 2-thiolation protein 2 (493 aa).

The residue at position 489 (Ser489) is a Phosphoserine.

It belongs to the CTU2/NCS2 family. As to quaternary structure, interacts with NCS6 and URM1. May act by forming a heterodimer with NCS6.

The protein resides in the cytoplasm. Its pathway is tRNA modification; 5-methoxycarbonylmethyl-2-thiouridine-tRNA biosynthesis. Its function is as follows. Plays a central role in 2-thiolation of mcm(5)S(2)U at tRNA wobble positions of tRNA(Lys), tRNA(Glu) and tRNA(Gln). May act by forming a heterodimer with NCS6 that ligates sulfur from thiocarboxylated URM1 onto the uridine of tRNAs at wobble position. Prior mcm(5) tRNA modification by the elongator complex is required for 2-thiolation. May also be involved in protein urmylation. The protein is Cytoplasmic tRNA 2-thiolation protein 2 of Saccharomyces cerevisiae (strain YJM789) (Baker's yeast).